The primary structure comprises 534 residues: Cytokinin dehydrogenase 1 (534 aa).

The signal sequence occupies residues 1–18 (MAVVYYLLLAGLIACSHA). Residues Asn-52, Asn-63, and Asn-89 are each glycosylated (N-linked (GlcNAc...) asparagine). One can recognise an FAD-binding PCMH-type domain in the interval 65–245 (TSALPAAVLY…TRARIAVEPA (181 aa)). Residues Phe-100, Gly-102, Arg-103, and Gly-104 each contribute to the FAD site. His-105 carries the post-translational modification Pros-8alpha-FAD histidine. Residues Ser-106 and Gln-110 each contribute to the FAD site. An N-linked (GlcNAc...) asparagine glycan is attached at Asn-134. Residues Asp-169, Thr-174, Ser-180, Ile-184, and Ile-235 each coordinate FAD. A N(6)-dimethylallyladenine-binding site is contributed by Asp-169. Residue Asp-169 participates in trans-zeatin binding. N-linked (GlcNAc...) asparagine glycosylation is found at Asn-294, Asn-323, and Asn-338. Residue Glu-381 participates in N(6)-dimethylallyladenine binding. Glu-381 contacts trans-zeatin. N-linked (GlcNAc...) asparagine glycosylation is present at Asn-434. Ser-456 is a binding site for trans-zeatin. The FAD site is built by Tyr-491, Ser-527, and Gln-530.

The protein belongs to the oxygen-dependent FAD-linked oxidoreductase family. In terms of assembly, monomer. It depends on FAD as a cofactor. Post-translationally, glycosylated; with approximately 10 hexose residues per site. As to expression, expressed in immature kernels and unpollinated cobs. Weakly expressed in kernels harvested two weeks after anthesis.

The protein resides in the secreted. Its subcellular location is the extracellular space. It carries out the reaction N(6)-dimethylallyladenine + A + H2O = 3-methyl-2-butenal + adenine + AH2. With respect to regulation, competitive inhibition by phenylureas. In terms of biological role, catalyzes the oxidation of cytokinins, a family of N(6)-substituted adenine derivatives that are plant hormones, where the substituent is an isopentenyl group. Cleaves trans-zeatin, N(6)-dimethylallyladenine (isopentenyladenine), isopentenyladenosine, zeatin riboside and cis-zeatin, but not dihydrozeatin, kinetin and benzylaminopurine. This is Cytokinin dehydrogenase 1 (CKX1) from Zea mays (Maize).